We begin with the raw amino-acid sequence, 237 residues long: MEIIPAIDLKDGRCVRLYQGDFQQVTVYGDDPVAIAQHWFEQGAPRLHLVDLDGARSGQPVHTDIIRAIVRSFGAPVQLGGGLRSIEAVERALELGVQRVVLGTAAVEHPDMIAHLVAQFGDAIAVAIDARNGMAATAGWTETAAMSAVDLLERMVTLGVRRVIYTDISRDGTLSEPNIAATGALVRPDGPAIIASGGISTLDHLRRLADVGVEGAIVGRALYTGDLSLREALAAFQ.

The active-site Proton acceptor is Asp-8. The active-site Proton donor is Asp-129.

It belongs to the HisA/HisF family.

The protein localises to the cytoplasm. The catalysed reaction is 1-(5-phospho-beta-D-ribosyl)-5-[(5-phospho-beta-D-ribosylamino)methylideneamino]imidazole-4-carboxamide = 5-[(5-phospho-1-deoxy-D-ribulos-1-ylimino)methylamino]-1-(5-phospho-beta-D-ribosyl)imidazole-4-carboxamide. It participates in amino-acid biosynthesis; L-histidine biosynthesis; L-histidine from 5-phospho-alpha-D-ribose 1-diphosphate: step 4/9. This chain is 1-(5-phosphoribosyl)-5-[(5-phosphoribosylamino)methylideneamino] imidazole-4-carboxamide isomerase, found in Roseiflexus castenholzii (strain DSM 13941 / HLO8).